Here is a 722-residue protein sequence, read N- to C-terminus: D-galactosyl-beta-1-&gt;4-L-rhamnose phosphorylase (722 aa).

Aspartate 319 functions as the Proton donor in the catalytic mechanism.

Belongs to the glycoside hydrolase 112 family.

It catalyses the reaction beta-D-galactosyl-(1-&gt;4)-L-rhamnose + phosphate = alpha-D-galactose 1-phosphate + L-rhamnopyranose. Reversibly phosphorolyzes beta-D-galactosyl-(1-&gt;4)-L-rhamnose to form alpha-D-galactose 1-phosphate and L-rhamnose. Does not phosphorolyze galacto-N-biose or lacto-N-biose. In the reverse reaction, has the highest activity toward L-rhamnose, also has activity toward L-mannose, and low activity toward L-lyxose, D-glucose, 2-deoxy-D-glucose and D-galactose. The polypeptide is D-galactosyl-beta-1-&gt;4-L-rhamnose phosphorylase (Lachnoclostridium phytofermentans (strain ATCC 700394 / DSM 18823 / ISDg) (Clostridium phytofermentans)).